The primary structure comprises 333 residues: Phosphoribosylformylglycinamidine cyclo-ligase (333 aa).

This sequence belongs to the AIR synthase family.

It is found in the cytoplasm. The enzyme catalyses 2-formamido-N(1)-(5-O-phospho-beta-D-ribosyl)acetamidine + ATP = 5-amino-1-(5-phospho-beta-D-ribosyl)imidazole + ADP + phosphate + H(+). It functions in the pathway purine metabolism; IMP biosynthesis via de novo pathway; 5-amino-1-(5-phospho-D-ribosyl)imidazole from N(2)-formyl-N(1)-(5-phospho-D-ribosyl)glycinamide: step 2/2. The protein is Phosphoribosylformylglycinamidine cyclo-ligase of Methanosarcina acetivorans (strain ATCC 35395 / DSM 2834 / JCM 12185 / C2A).